A 416-amino-acid polypeptide reads, in one-letter code: Serine hydroxymethyltransferase (416 aa).

(6S)-5,6,7,8-tetrahydrofolate is bound by residues Leu118 and 122–124; that span reads GHL. At Lys226 the chain carries N6-(pyridoxal phosphate)lysine. A (6S)-5,6,7,8-tetrahydrofolate-binding site is contributed by Glu242.

The protein belongs to the SHMT family. As to quaternary structure, homodimer. The cofactor is pyridoxal 5'-phosphate.

The protein resides in the cytoplasm. The enzyme catalyses (6R)-5,10-methylene-5,6,7,8-tetrahydrofolate + glycine + H2O = (6S)-5,6,7,8-tetrahydrofolate + L-serine. Its pathway is one-carbon metabolism; tetrahydrofolate interconversion. It functions in the pathway amino-acid biosynthesis; glycine biosynthesis; glycine from L-serine: step 1/1. Catalyzes the reversible interconversion of serine and glycine with tetrahydrofolate (THF) serving as the one-carbon carrier. This reaction serves as the major source of one-carbon groups required for the biosynthesis of purines, thymidylate, methionine, and other important biomolecules. Also exhibits THF-independent aldolase activity toward beta-hydroxyamino acids, producing glycine and aldehydes, via a retro-aldol mechanism. The sequence is that of Serine hydroxymethyltransferase from Helicobacter pylori (strain J99 / ATCC 700824) (Campylobacter pylori J99).